A 149-amino-acid chain; its full sequence is D-aminoacyl-tRNA deacylase (149 aa).

The Gly-cisPro motif, important for rejection of L-amino acids motif lies at 137-138; sequence GP.

It belongs to the DTD family. Homodimer.

Its subcellular location is the cytoplasm. It carries out the reaction glycyl-tRNA(Ala) + H2O = tRNA(Ala) + glycine + H(+). The enzyme catalyses a D-aminoacyl-tRNA + H2O = a tRNA + a D-alpha-amino acid + H(+). In terms of biological role, an aminoacyl-tRNA editing enzyme that deacylates mischarged D-aminoacyl-tRNAs. Also deacylates mischarged glycyl-tRNA(Ala), protecting cells against glycine mischarging by AlaRS. Acts via tRNA-based rather than protein-based catalysis; rejects L-amino acids rather than detecting D-amino acids in the active site. By recycling D-aminoacyl-tRNA to D-amino acids and free tRNA molecules, this enzyme counteracts the toxicity associated with the formation of D-aminoacyl-tRNA entities in vivo and helps enforce protein L-homochirality. The chain is D-aminoacyl-tRNA deacylase from Clostridium acetobutylicum (strain ATCC 824 / DSM 792 / JCM 1419 / IAM 19013 / LMG 5710 / NBRC 13948 / NRRL B-527 / VKM B-1787 / 2291 / W).